Reading from the N-terminus, the 312-residue chain is MRVGQLLRFRSTSLRSSTARQEYVPHHKPVVEDDIKRLEDFLLSKPNVLVLTGAGISTESGIPDYRSEGVGLYARSNHKPVQHMEFVKSSAVRKRYWARNFVGWPKFSATQPNATHHALARFEREERVQAVVTQNVDRLHTKAGSRNVVEVHGSGYVVKCLSCEYRIDRHEFQSILASLNPAFKDAPDMIRPDGDVEIPLEYIENFRIPECTQCGGDLKPEIVFFGDSVPRPRVDQIAGMVYNSDGLLVLGSSLLVFSGYRVVLQTKDLKLPVGIVNIGETRADHLADIKISAKCGDVIPKLFDFRNSKSVS.

The transit peptide at 1-16 (MRVGQLLRFRSTSLRS) directs the protein to the mitochondrion. The Deacetylase sirtuin-type domain maps to 28-312 (KPVVEDDIKR…FDFRNSKSVS (285 aa)). Residues 53-73 (GAGISTESGIPDYRSEGVGLY) and 134-137 (QNVD) each bind NAD(+). The active-site Proton acceptor is histidine 152. Zn(2+) is bound by residues cysteine 160, cysteine 163, cysteine 211, and cysteine 214. NAD(+) contacts are provided by residues 251–253 (GSS), 277–279 (NIG), and cysteine 295.

It belongs to the sirtuin family. Class II subfamily. Zn(2+) serves as cofactor.

It is found in the mitochondrion matrix. It carries out the reaction N(6)-acetyl-L-lysyl-[protein] + NAD(+) + H2O = 2''-O-acetyl-ADP-D-ribose + nicotinamide + L-lysyl-[protein]. Its function is as follows. NAD-dependent protein deacylase. Catalyzes the NAD-dependent hydrolysis of acyl groups from lysine residues. The sequence is that of NAD-dependent protein deacylase Sirt4 (Sirt4) from Drosophila melanogaster (Fruit fly).